We begin with the raw amino-acid sequence, 446 residues long: BAG family molecular chaperone regulator 7 (446 aa).

Positions 230–252 are disordered; it reads TGGEKKKKHEEKEKKEKIETKSK. A compositionally biased stretch (basic and acidic residues) spans 239–250; sequence EEKEKKEKIETK. An IQ domain is found at 303 to 332; sequence PEYAAVMIQRAFKAYLIRRSKSLRALRDLA. The 78-residue stretch at 330–407 folds into the BAG domain; the sequence is DLAIAKTKLK…AMLDVVDPQP (78 aa). At Thr-443 the chain carries Phosphothreonine.

As to quaternary structure, binds to the ATPase domain of HSP70/HSC70 chaperones. Interacts with HSP70-11/BIP2.

The protein localises to the endoplasmic reticulum. Its function is as follows. Co-chaperone that regulates diverse cellular pathways, such as programmed cell death and stress responses. Necessary for the proper maintenance of the unfolded protein response (UPR) during heat and cold tolerance. The chain is BAG family molecular chaperone regulator 7 (BAG7) from Arabidopsis thaliana (Mouse-ear cress).